We begin with the raw amino-acid sequence, 447 residues long: Cysteine--tRNA ligase (447 aa).

C28 contributes to the Zn(2+) binding site. The short motif at 30 to 40 (PTVYNYIHIGN) is the 'HIGH' region element. Zn(2+) is bound by residues C211, H236, and E240. The short motif at 268-272 (KMSKS) is the 'KMSKS' region element. Residue K271 participates in ATP binding.

It belongs to the class-I aminoacyl-tRNA synthetase family. In terms of assembly, monomer. It depends on Zn(2+) as a cofactor.

The protein resides in the cytoplasm. It carries out the reaction tRNA(Cys) + L-cysteine + ATP = L-cysteinyl-tRNA(Cys) + AMP + diphosphate. In Streptococcus agalactiae serotype Ia (strain ATCC 27591 / A909 / CDC SS700), this protein is Cysteine--tRNA ligase.